The chain runs to 239 residues: Ribonuclease 3 (239 aa).

One can recognise an RNase III domain in the interval His-11 to Asp-133. Mg(2+) is bound at residue Glu-46. Residue Asp-50 is part of the active site. The Mg(2+) site is built by Asp-119 and Glu-122. Positions Asp-160–Glu-230 constitute a DRBM domain.

It belongs to the ribonuclease III family. Homodimer. Requires Mg(2+) as cofactor.

The protein resides in the cytoplasm. It carries out the reaction Endonucleolytic cleavage to 5'-phosphomonoester.. Digests double-stranded RNA. Involved in the processing of primary rRNA transcript to yield the immediate precursors to the large and small rRNAs (23S and 16S). Also processes some mRNAs, and tRNAs when they are encoded in the rRNA operon. Its function is as follows. CRISPR (clustered regularly interspaced short palindromic repeat) is an adaptive immune system that provides protection against mobile genetic elements (viruses, transposable elements and conjugative plasmids). CRISPR clusters contain spacers, sequences complementary to antecedent mobile elements, and target invading nucleic acids. CRISPR clusters are transcribed and processed into CRISPR RNA (crRNA). In this organism endogenous ribonuclease 3 and Cas9 are required for correct coprocessing of pre-crRNA and the trans-encoded small RNA (tracrRNA). Cas9, crRNA and tracRNA are required for cleavage of invading DNA. Involved in 3'-end processing but not 5'-end processing of crRNA and tracrRNA. The protein is Ribonuclease 3 of Neisseria meningitidis serogroup C (strain 8013).